The chain runs to 394 residues: Alanine racemase 2 (394 aa).

K39 (proton acceptor; specific for D-alanine) is an active-site residue. K39 carries the N6-(pyridoxal phosphate)lysine modification. R139 contacts substrate. Y272 functions as the Proton acceptor; specific for L-alanine in the catalytic mechanism. A substrate-binding site is contributed by M320.

Belongs to the alanine racemase family. Pyridoxal 5'-phosphate serves as cofactor.

It catalyses the reaction L-alanine = D-alanine. Its pathway is amino-acid biosynthesis; D-alanine biosynthesis; D-alanine from L-alanine: step 1/1. Catalyzes the interconversion of L-alanine and D-alanine. May also act on other amino acids. The chain is Alanine racemase 2 (alr2) from Bacillus subtilis (strain 168).